The sequence spans 27 residues: DELTA-pseudomyrmecitoxin-Pp1a subunit A (27 aa).

Heterodimer composed of subunit A and subunit B (DELTA-PSDTX-Pp1a); disulfide-linked. Expressed by the venom gland.

The protein localises to the secreted. Functionally, this heterodimer has insecticidal and cytotoxic properties. Induces immediate paralysis when injected into blowflies (Lucilia cuprina), and then death within 24 hours. Also inhibits the growth of Aedes albopictus mosquito C6/36 cells. The chain is DELTA-pseudomyrmecitoxin-Pp1a subunit A from Pseudomyrmex penetrator (Ant).